The following is a 109-amino-acid chain: Large ribosomal subunit protein uL24 (109 aa).

The protein belongs to the universal ribosomal protein uL24 family. As to quaternary structure, part of the 50S ribosomal subunit.

Functionally, one of two assembly initiator proteins, it binds directly to the 5'-end of the 23S rRNA, where it nucleates assembly of the 50S subunit. One of the proteins that surrounds the polypeptide exit tunnel on the outside of the subunit. This is Large ribosomal subunit protein uL24 from Legionella pneumophila (strain Corby).